The primary structure comprises 110 residues: MNIQALMQQAQAMQKQVEANVEKAKKELADKEVQAEAGNGLVKVTMTGRHVVKRLSIDPSLLEDEPDLIEDLIAAAINAAVTKADELSETTLAKATSGMGLPPGMQGLFG.

This sequence belongs to the YbaB/EbfC family. In terms of assembly, homodimer.

It localises to the cytoplasm. The protein localises to the nucleoid. Its function is as follows. Binds to DNA and alters its conformation. May be involved in regulation of gene expression, nucleoid organization and DNA protection. This chain is Nucleoid-associated protein PsycPRwf_1729, found in Psychrobacter sp. (strain PRwf-1).